A 166-amino-acid polypeptide reads, in one-letter code: Large ribosomal subunit protein uL10 (166 aa).

The protein belongs to the universal ribosomal protein uL10 family. In terms of assembly, part of the ribosomal stalk of the 50S ribosomal subunit. The N-terminus interacts with L11 and the large rRNA to form the base of the stalk. The C-terminus forms an elongated spine to which L12 dimers bind in a sequential fashion forming a multimeric L10(L12)X complex.

Forms part of the ribosomal stalk, playing a central role in the interaction of the ribosome with GTP-bound translation factors. The chain is Large ribosomal subunit protein uL10 from Pseudomonas putida (strain W619).